Here is a 485-residue protein sequence, read N- to C-terminus: Glycogen synthase (485 aa).

Lys-20 lines the ADP-alpha-D-glucose pocket.

It belongs to the glycosyltransferase 1 family. Bacterial/plant glycogen synthase subfamily.

It catalyses the reaction [(1-&gt;4)-alpha-D-glucosyl](n) + ADP-alpha-D-glucose = [(1-&gt;4)-alpha-D-glucosyl](n+1) + ADP + H(+). It functions in the pathway glycan biosynthesis; glycogen biosynthesis. In terms of biological role, synthesizes alpha-1,4-glucan chains using ADP-glucose. In Vibrio parahaemolyticus serotype O3:K6 (strain RIMD 2210633), this protein is Glycogen synthase.